Consider the following 556-residue polypeptide: 2-succinyl-5-enolpyruvyl-6-hydroxy-3-cyclohexene-1-carboxylate synthase (556 aa).

The protein belongs to the TPP enzyme family. MenD subfamily. As to quaternary structure, homodimer. It depends on Mg(2+) as a cofactor. Mn(2+) serves as cofactor. Requires thiamine diphosphate as cofactor.

The catalysed reaction is isochorismate + 2-oxoglutarate + H(+) = 5-enolpyruvoyl-6-hydroxy-2-succinyl-cyclohex-3-ene-1-carboxylate + CO2. It functions in the pathway quinol/quinone metabolism; 1,4-dihydroxy-2-naphthoate biosynthesis; 1,4-dihydroxy-2-naphthoate from chorismate: step 2/7. Its pathway is quinol/quinone metabolism; menaquinone biosynthesis. In terms of biological role, catalyzes the thiamine diphosphate-dependent decarboxylation of 2-oxoglutarate and the subsequent addition of the resulting succinic semialdehyde-thiamine pyrophosphate anion to isochorismate to yield 2-succinyl-5-enolpyruvyl-6-hydroxy-3-cyclohexene-1-carboxylate (SEPHCHC). This Escherichia fergusonii (strain ATCC 35469 / DSM 13698 / CCUG 18766 / IAM 14443 / JCM 21226 / LMG 7866 / NBRC 102419 / NCTC 12128 / CDC 0568-73) protein is 2-succinyl-5-enolpyruvyl-6-hydroxy-3-cyclohexene-1-carboxylate synthase.